Here is a 152-residue protein sequence, read N- to C-terminus: SsrA-binding protein (152 aa).

It belongs to the SmpB family.

The protein resides in the cytoplasm. In terms of biological role, required for rescue of stalled ribosomes mediated by trans-translation. Binds to transfer-messenger RNA (tmRNA), required for stable association of tmRNA with ribosomes. tmRNA and SmpB together mimic tRNA shape, replacing the anticodon stem-loop with SmpB. tmRNA is encoded by the ssrA gene; the 2 termini fold to resemble tRNA(Ala) and it encodes a 'tag peptide', a short internal open reading frame. During trans-translation Ala-aminoacylated tmRNA acts like a tRNA, entering the A-site of stalled ribosomes, displacing the stalled mRNA. The ribosome then switches to translate the ORF on the tmRNA; the nascent peptide is terminated with the 'tag peptide' encoded by the tmRNA and targeted for degradation. The ribosome is freed to recommence translation, which seems to be the essential function of trans-translation. The sequence is that of SsrA-binding protein from Rickettsia peacockii (strain Rustic).